We begin with the raw amino-acid sequence, 396 residues long: Cell adhesion molecule 3 (396 aa).

The signal sequence occupies residues 1 to 22 (MGAPSALPLLLLLACSWAPGGA). The Ig-like V-type domain maps to 23 to 124 (NLSQDDSQPW…VRTAKSLVTV (102 aa)). The Extracellular segment spans residues 23 to 328 (NLSQDDSQPW…PVPSSSSTYH (306 aa)). Cystine bridges form between C48-C108, C150-C207, and C252-C297. Ig-like C2-type domains lie at 128–226 (PQKP…QRIE) and 231–313 (PTAM…FTLN). A glycan (N-linked (GlcNAc...) asparagine) is linked at N288. A helical transmembrane segment spans residues 329–349 (AIIGGIVAFIVFLLLILLIFL). Residues 350 to 396 (GHYLIRHKGTYLTHEAKGSDDAPDADTAIINAEGGQSGGDDKKEYFI) are Cytoplasmic-facing. The tract at residues 365 to 396 (AKGSDDAPDADTAIINAEGGQSGGDDKKEYFI) is disordered. S386 is subject to Phosphoserine.

The protein belongs to the nectin family. In terms of assembly, homodimer. Can form trans-heterodimers with NECTIN3. Interacts with EPB41L1, DLG3, PALS2 and CASK.

It is found in the cell membrane. The protein localises to the cell junction. Involved in cell-cell adhesion. Has both calcium-independent homophilic cell-cell adhesion activity and calcium-independent heterophilic cell-cell adhesion activity with IGSF4, NECTIN1 and NECTIN3. Interaction with EPB41L1 may regulate structure or function of cell-cell junctions. In Rattus norvegicus (Rat), this protein is Cell adhesion molecule 3 (Cadm3).